A 125-amino-acid chain; its full sequence is Small ribosomal subunit protein uS13 (125 aa).

It belongs to the universal ribosomal protein uS13 family. Part of the 30S ribosomal subunit. Forms a loose heterodimer with protein S19. Forms two bridges to the 50S subunit in the 70S ribosome.

Located at the top of the head of the 30S subunit, it contacts several helices of the 16S rRNA. In the 70S ribosome it contacts the 23S rRNA (bridge B1a) and protein L5 of the 50S subunit (bridge B1b), connecting the 2 subunits; these bridges are implicated in subunit movement. Contacts the tRNAs in the A and P-sites. The protein is Small ribosomal subunit protein uS13 of Gluconobacter oxydans (strain 621H) (Gluconobacter suboxydans).